Consider the following 212-residue polypeptide: FMN-dependent NADH:quinone oxidoreductase 1 (212 aa).

FMN is bound by residues Ser10, 16–18 (SHS), 97–100 (MYNF), and 145–148 (SRGG).

The protein belongs to the azoreductase type 1 family. In terms of assembly, homodimer. The cofactor is FMN.

The enzyme catalyses 2 a quinone + NADH + H(+) = 2 a 1,4-benzosemiquinone + NAD(+). It catalyses the reaction N,N-dimethyl-1,4-phenylenediamine + anthranilate + 2 NAD(+) = 2-(4-dimethylaminophenyl)diazenylbenzoate + 2 NADH + 2 H(+). Its function is as follows. Quinone reductase that provides resistance to thiol-specific stress caused by electrophilic quinones. In terms of biological role, also exhibits azoreductase activity. Catalyzes the reductive cleavage of the azo bond in aromatic azo compounds to the corresponding amines. This Pseudomonas fluorescens (strain Pf0-1) protein is FMN-dependent NADH:quinone oxidoreductase 1.